We begin with the raw amino-acid sequence, 28 residues long: HSDAVFTDNYSRFRKQMAVKKYLNSVLT.

A Threonine amide modification is found at Thr-28.

Belongs to the glucagon family.

The protein resides in the secreted. In terms of biological role, VIP is a neuropeptide involved in a diverse array of physiological processes through activating the PACAP subfamily of class B1 G protein-coupled receptors: VIP receptor 1 (VPR1) and VIP receptor 2 (VPR2). Abundantly expressed throughout the CNS and peripheral nervous systems where they primarily exert neuroprotective and immune modulatory roles. Also causes vasodilation, lowers arterial blood pressure, stimulates myocardial contractility, increases glycogenolysis and relaxes the smooth muscle of trachea, stomach and gall bladder. The protein is Vasoactive intestinal peptide (vip) of Pelophylax ridibundus (Marsh frog).